The sequence spans 336 residues: 25S rRNA (uridine(2634)-N(3))-methyltransferase (336 aa).

Residues 286-307 form a disordered region; that stretch reads PGYHHRRTNSEQDTTKPAKERD. Residues 293–307 are compositionally biased toward basic and acidic residues; the sequence is TNSEQDTTKPAKERD.

It belongs to the class I-like SAM-binding methyltransferase superfamily. BMT5 family.

It is found in the nucleus. Its subcellular location is the nucleolus. The catalysed reaction is uridine(2634) in 25S rRNA + S-adenosyl-L-methionine = N(3)-methyluridine(2634) in 25S rRNA + S-adenosyl-L-homocysteine + H(+). In terms of biological role, S-adenosyl-L-methionine-dependent methyltransferase that specifically methylates the N(3) position of uridine 2634 (m3U2634) in 25S rRNA. This chain is 25S rRNA (uridine(2634)-N(3))-methyltransferase (BMT5), found in Saccharomyces cerevisiae (strain ATCC 204508 / S288c) (Baker's yeast).